The following is a 99-amino-acid chain: SAGA-associated factor 11 (99 aa).

The segment at 71–92 (IHCENCGRDVSANRLAAHLQRC) adopts an SGF11-type zinc-finger fold.

It belongs to the SGF11 family. Component of the 1.8 MDa SAGA transcription coactivator-HAT complex. SAGA is built of 5 distinct domains with specialized functions. Within the SAGA complex, SUS1, SGF11, SGF73 and UBP8 form an additional subcomplex of SAGA called the DUB module (deubiquitination module). Interacts directly with SGF73, SUS1 and UBP8.

Its subcellular location is the nucleus. Its function is as follows. Functions as a component of the transcription regulatory histone acetylation (HAT) complex SAGA. At the promoters, SAGA is required for recruitment of the basal transcription machinery. It influences RNA polymerase II transcriptional activity through different activities such as TBP interaction and promoter selectivity, interaction with transcription activators, and chromatin modification through histone acetylation and deubiquitination. SAGA acetylates nucleosomal histone H3 to some extent (to form H3K9ac, H3K14ac, H3K18ac and H3K23ac). SAGA interacts with DNA via upstream activating sequences (UASs). Involved in transcriptional regulation of a subset of SAGA-regulated genes. Within the SAGA complex, participates in a subcomplex, that specifically deubiquitinates histones H2B. This chain is SAGA-associated factor 11, found in Saccharomyces cerevisiae (strain YJM789) (Baker's yeast).